The primary structure comprises 288 residues: Light-independent protochlorophyllide reductase iron-sulfur ATP-binding protein (288 aa).

ATP-binding positions include 10 to 15 and K39; that span reads GIGKST. S14 provides a ligand contact to Mg(2+). Residues C95 and C129 each coordinate [4Fe-4S] cluster. 180 to 181 contacts ATP; the sequence is NR.

It belongs to the NifH/BchL/ChlL family. In terms of assembly, homodimer. Protochlorophyllide reductase is composed of three subunits; ChlL, ChlN and ChlB. Requires [4Fe-4S] cluster as cofactor.

It carries out the reaction chlorophyllide a + oxidized 2[4Fe-4S]-[ferredoxin] + 2 ADP + 2 phosphate = protochlorophyllide a + reduced 2[4Fe-4S]-[ferredoxin] + 2 ATP + 2 H2O. It participates in porphyrin-containing compound metabolism; chlorophyll biosynthesis (light-independent). Component of the dark-operative protochlorophyllide reductase (DPOR) that uses Mg-ATP and reduced ferredoxin to reduce ring D of protochlorophyllide (Pchlide) to form chlorophyllide a (Chlide). This reaction is light-independent. The L component serves as a unique electron donor to the NB-component of the complex, and binds Mg-ATP. The protein is Light-independent protochlorophyllide reductase iron-sulfur ATP-binding protein of Trichodesmium erythraeum (strain IMS101).